The primary structure comprises 131 residues: Methylglyoxal synthase (131 aa).

Positions 1 to 131 constitute an MGS-like domain; it reads MKIALIAHDK…GDLDYRKLRK (131 aa). Substrate is bound by residues His8, Lys12, 34 to 37, and 54 to 55; these read TGTT and SG. Asp60 serves as the catalytic Proton donor/acceptor. His87 contributes to the substrate binding site.

Belongs to the methylglyoxal synthase family.

It catalyses the reaction dihydroxyacetone phosphate = methylglyoxal + phosphate. Functionally, catalyzes the formation of methylglyoxal from dihydroxyacetone phosphate. This is Methylglyoxal synthase from Bacillus cereus (strain ATCC 10987 / NRS 248).